A 161-amino-acid chain; its full sequence is E3 ubiquitin ligase complex SCF subunit sconC (161 aa).

Residues 103–161 (ILAANYLDIKGLLDVGCKTVANMIKGKSPEEIRKTFNIQNDFTPEEEDQIRRENEWAEE) form an interaction with the F-box domain of F-box proteins region.

This sequence belongs to the SKP1 family. As to quaternary structure, component of the SCF (SKP1-CUL1-F-box protein) E3 ubiquitin ligase complexes.

It functions in the pathway protein modification; protein ubiquitination. Functionally, essential component of the SCF (SKP1-CUL1-F-box protein) E3 ubiquitin ligase complexes, which mediate the ubiquitination and subsequent proteasomal degradation of target proteins. Controls sulfur metabolite repression, probably by mediating the inactivation or degradation of the metR transcription factor. The chain is E3 ubiquitin ligase complex SCF subunit sconC (sconC) from Aspergillus terreus (strain NIH 2624 / FGSC A1156).